Here is a 945-residue protein sequence, read N- to C-terminus: Isoleucine--tRNA ligase 1 (945 aa).

The 'HIGH' region signature appears at 66–76 (PYANGDIHLGH). Residue Glu581 participates in L-isoleucyl-5'-AMP binding. The short motif at 622–626 (KMSKS) is the 'KMSKS' region element. Lys625 provides a ligand contact to ATP. Zn(2+) is bound by residues Cys908, Cys911, Cys928, and Cys931.

Belongs to the class-I aminoacyl-tRNA synthetase family. IleS type 1 subfamily. As to quaternary structure, monomer. Zn(2+) is required as a cofactor.

Its subcellular location is the cytoplasm. The catalysed reaction is tRNA(Ile) + L-isoleucine + ATP = L-isoleucyl-tRNA(Ile) + AMP + diphosphate. In terms of biological role, catalyzes the attachment of isoleucine to tRNA(Ile). As IleRS can inadvertently accommodate and process structurally similar amino acids such as valine, to avoid such errors it has two additional distinct tRNA(Ile)-dependent editing activities. One activity is designated as 'pretransfer' editing and involves the hydrolysis of activated Val-AMP. The other activity is designated 'posttransfer' editing and involves deacylation of mischarged Val-tRNA(Ile). The protein is Isoleucine--tRNA ligase 1 of Burkholderia mallei (strain ATCC 23344).